Here is a 405-residue protein sequence, read N- to C-terminus: Farnesyl pyrophosphate synthase (405 aa).

Residues Asp158 and Asp162 each coordinate Mg(2+). The DDXXD motif signature appears at 158–162; that stretch reads DDLAD.

This sequence belongs to the FPP/GGPP synthase family. It depends on Mg(2+) as a cofactor.

It catalyses the reaction isopentenyl diphosphate + (2E)-geranyl diphosphate = (2E,6E)-farnesyl diphosphate + diphosphate. It participates in pheromone biosynthesis. Functionally, farnesyl pyrophosphate synthase involved in murgantiol biosynthesis, a male-released aggregation pheromone, by catalyzing the formation of (2E,6E)-farnesyl diphosphate. The chain is Farnesyl pyrophosphate synthase from Murgantia histrionica (Harlequin bug).